We begin with the raw amino-acid sequence, 453 residues long: DNA repair protein RadA (453 aa).

Residues 10–27 (CQECGYQSPKYLGRCPNC) form a C4-type zinc finger. 95-102 (GDPGIGKS) contacts ATP. The RadA KNRFG motif motif lies at 251-255 (KNRFG). The segment at 350-453 (DAYLKSAGGV…VGQVLNAVFS (104 aa)) is lon-protease-like.

It belongs to the RecA family. RadA subfamily.

Its function is as follows. DNA-dependent ATPase involved in processing of recombination intermediates, plays a role in repairing DNA breaks. Stimulates the branch migration of RecA-mediated strand transfer reactions, allowing the 3' invading strand to extend heteroduplex DNA faster. Binds ssDNA in the presence of ADP but not other nucleotides, has ATPase activity that is stimulated by ssDNA and various branched DNA structures, but inhibited by SSB. Does not have RecA's homology-searching function. The chain is DNA repair protein RadA from Streptococcus pyogenes serotype M1.